We begin with the raw amino-acid sequence, 298 residues long: Tyrosine recombinase XerC (298 aa).

The Core-binding (CB) domain occupies 2-88 (TDLHTDVERY…ALRSFFDWLV (87 aa)). Residues 109 to 288 (HLPKNIDVDD…DFQHLASVYD (180 aa)) enclose the Tyr recombinase domain. Catalysis depends on residues Arg148, Lys172, His240, Arg243, and His266. The active-site O-(3'-phospho-DNA)-tyrosine intermediate is the Tyr275.

Belongs to the 'phage' integrase family. XerC subfamily. As to quaternary structure, forms a cyclic heterotetrameric complex composed of two molecules of XerC and two molecules of XerD, in which XerC interacts with XerD via its C-terminal region, XerD interacts with XerC via its C-terminal region and so on.

It is found in the cytoplasm. FtsK may regulate the catalytic switch between XerC and XerD in the heterotetrameric complex during the two steps of the recombination process. In terms of biological role, site-specific tyrosine recombinase, which acts by catalyzing the cutting and rejoining of the recombining DNA molecules. Binds cooperatively to specific DNA consensus sequences that are separated from XerD binding sites by a short central region, forming the heterotetrameric XerC-XerD complex that recombines DNA substrates. The complex is essential to convert dimers of the bacterial chromosome into monomers to permit their segregation at cell division. It also contributes to the segregational stability of plasmids. In the complex XerC specifically exchanges the top DNA strands. The polypeptide is Tyrosine recombinase XerC (Escherichia coli O6:K15:H31 (strain 536 / UPEC)).